The chain runs to 562 residues: AT-rich interactive domain-containing protein 1 (562 aa).

The 94-residue stretch at 43–136 (KELISLFRPL…YLDAFGRWLN (94 aa)) folds into the ARID domain. The ELM2 domain occupies 358–448 (PCALVGSKFQ…KLELGPAFYM (91 aa)).

It localises to the nucleus. The polypeptide is AT-rich interactive domain-containing protein 1 (ARID1) (Arabidopsis thaliana (Mouse-ear cress)).